A 136-amino-acid polypeptide reads, in one-letter code: Protein NrdI (136 aa).

Belongs to the NrdI family.

Probably involved in ribonucleotide reductase function. The protein is Protein NrdI of Salmonella newport (strain SL254).